Here is an 878-residue protein sequence, read N- to C-terminus: Aconitate hydratase A (878 aa).

Residues Cys-426, Cys-492, and Cys-495 each contribute to the [4Fe-4S] cluster site.

It belongs to the aconitase/IPM isomerase family. In terms of assembly, monomer. It depends on [4Fe-4S] cluster as a cofactor.

The enzyme catalyses citrate = D-threo-isocitrate. The catalysed reaction is (2S,3R)-3-hydroxybutane-1,2,3-tricarboxylate = 2-methyl-cis-aconitate + H2O. Its pathway is carbohydrate metabolism; tricarboxylic acid cycle; isocitrate from oxaloacetate: step 2/2. It functions in the pathway organic acid metabolism; propanoate degradation. Functionally, involved in the catabolism of short chain fatty acids (SCFA) via the tricarboxylic acid (TCA)(acetyl degradation route) and probably the 2-methylcitrate cycle I (propionate degradation route). Catalyzes the reversible isomerization of citrate to isocitrate via cis-aconitate. Could catalyze the hydration of 2-methyl-cis-aconitate to yield (2R,3S)-2-methylisocitrate. The apo form of AcnA functions as a RNA-binding regulatory protein. The protein is Aconitate hydratase A (acnA) of Rickettsia conorii (strain ATCC VR-613 / Malish 7).